Consider the following 390-residue polypeptide: LIM/homeobox protein Lhx4 (390 aa).

LIM zinc-binding domains lie at 28-87 (PQCA…RFGT) and 88-150 (KCTA…AKQN). A DNA-binding region (homeobox) is located at residues 157–216 (AKRPRTTITAKQLETLKNAYKNSPKPARHVREQLSSETGLDMRVVQVWFQNRRAKEKRLK). An interaction with DNA region spans residues 161 to 181 (RTTITAKQLETLKNAYKNSPK). The interval 199 to 211 (RVVQVWFQNRRAK) is interaction with 5-mCpG DNA. Disordered regions lie at residues 230 to 253 (SVKRSRGSSKQEKESSAEDCGVSD) and 356 to 390 (AGGPTSDISTGSSVGYPDFPTSPGSWLDEMDHPPF).

It is found in the nucleus. In terms of biological role, may play a critical role in the development of respiratory control mechanisms and in the normal growth and maturation of the lung. Binds preferentially to methylated DNA. The polypeptide is LIM/homeobox protein Lhx4 (LHX4) (Homo sapiens (Human)).